A 201-amino-acid polypeptide reads, in one-letter code: MQTSPLLTQLMEALRCLPGVGPKSAQRMAFTLLQRDRSGGMRLAQALTRAMSEIGHCADCRTFTEQDVCNICSNPRRQENGQICVVESPADIYAIEQTGQFPGRYFVLMGHLSPLDGIGPDDIGLDRLEQRLASEKISELILATNPTVEGEATANYIAELCAEAGVEASRIAHGVPVGGELEMVDGTTLSHSLAGRHKIIF.

A C4-type zinc finger spans residues 57–72; sequence CADCRTFTEQDVCNIC. The Toprim domain maps to 81 to 176; that stretch reads GQICVVESPA…EASRIAHGVP (96 aa).

This sequence belongs to the RecR family.

Functionally, may play a role in DNA repair. It seems to be involved in an RecBC-independent recombinational process of DNA repair. It may act with RecF and RecO. The polypeptide is Recombination protein RecR (Salmonella choleraesuis (strain SC-B67)).